The chain runs to 1387 residues: Magnesium-chelatase subunit ChlH, chloroplastic (1387 aa).

The transit peptide at 1-50 (MSSLVSTPFTTATGVQKKLGAPVPLHSFLLSRRQPAAGAGRGRAAAAAIR) directs the protein to the chloroplast.

It belongs to the Mg-chelatase subunit H family. In terms of assembly, the magnesium chelatase complex is a heterotrimer consisting of subunits CHLI, CHLD and CHLH.

It localises to the plastid. It is found in the chloroplast stroma. The protein resides in the chloroplast membrane. The catalysed reaction is protoporphyrin IX + Mg(2+) + ATP + H2O = Mg-protoporphyrin IX + ADP + phosphate + 3 H(+). Its pathway is porphyrin-containing compound metabolism; chlorophyll biosynthesis. Involved in chlorophyll biosynthesis. Catalyzes the insertion of magnesium ion into protoporphyrin IX to yield Mg-protoporphyrin IX. The reaction takes place in two steps, with an ATP-dependent activation followed by an ATP-dependent chelation step. May be involved in the plastid-to-nucleus retrograde signaling. The chain is Magnesium-chelatase subunit ChlH, chloroplastic (CHLH) from Oryza sativa subsp. japonica (Rice).